The sequence spans 637 residues: Threonine--tRNA ligase (637 aa).

The TGS domain maps to 1–61; that stretch reads MLNITLPDGS…VEDSAVQIIT (61 aa). The interval 242 to 533 is catalytic; it reads DHRKLGKQLD…LIENHAGSFP (292 aa). Residues cysteine 333, histidine 384, and histidine 510 each coordinate Zn(2+).

Belongs to the class-II aminoacyl-tRNA synthetase family. Homodimer. Requires Zn(2+) as cofactor.

It is found in the cytoplasm. It catalyses the reaction tRNA(Thr) + L-threonine + ATP = L-threonyl-tRNA(Thr) + AMP + diphosphate + H(+). Its function is as follows. Catalyzes the attachment of threonine to tRNA(Thr) in a two-step reaction: L-threonine is first activated by ATP to form Thr-AMP and then transferred to the acceptor end of tRNA(Thr). Also edits incorrectly charged L-seryl-tRNA(Thr). This chain is Threonine--tRNA ligase, found in Neisseria meningitidis serogroup B (strain ATCC BAA-335 / MC58).